Here is a 118-residue protein sequence, read N- to C-terminus: uncharacterized protein (118 aa).

Helical transmembrane passes span 7–27 and 34–58; these read VIVK…FIIE and VFVA…AIIF.

It is found in the membrane. This is an uncharacterized protein from Saccharomyces cerevisiae (strain ATCC 204508 / S288c) (Baker's yeast).